Reading from the N-terminus, the 113-residue chain is U11-theraphotoxin-Hhn1a (113 aa).

A signal peptide spans 1–21; that stretch reads MNTVRVTFLLVFVLAVSLGQA. A propeptide spanning residues 22–74 is cleaved from the precursor; it reads DKDENRMEMQGKTEQGKSYLDFAENLLLQKLEELEAKLLEEDSEESRNSRQKR. Disulfide bonds link Cys75/Cys90, Cys82/Cys95, and Cys89/Cys110.

This sequence belongs to the neurotoxin 14 (magi-1) family. 01 (HNTX-16) subfamily. As to expression, expressed by the venom gland.

It is found in the secreted. In terms of biological role, probable ion channel inhibitor. This Cyriopagopus hainanus (Chinese bird spider) protein is U11-theraphotoxin-Hhn1a.